Here is a 38-residue protein sequence, read N- to C-terminus: Iota-conotoxin-like L11.5 (38 aa).

Cystine bridges form between C5–C19, C12–C24, C18–C29, and C23–C36.

The protein belongs to the conotoxin I1 superfamily. In terms of tissue distribution, expressed by the venom duct.

The protein resides in the secreted. Its function is as follows. Iota-conotoxins bind to voltage-gated sodium channels (Nav) and act as agonists by shifting the voltage-dependence of activation to more hyperpolarized levels. Produces general excitatory symptoms. The sequence is that of Iota-conotoxin-like L11.5 from Conus lynceus (Lynceus cone).